The sequence spans 189 residues: MAMAAAASLLPASAAPTLPGRAFRPPRNSTPTASLSCDGGSRCRGVGLGVILGGCRAQGVRRNAAAETYVPGSGKYIAPDYLVKKVTAKELEELVRGERKVPLIVDFYATWCGPCVLMAQDIEMLAVEYENNALFVKVDTDDEYELARDMQVRGLPTLYFFSPDQSKDALRTEGLIPIDMIRNIIDNEL.

The N-terminal 56 residues, 1-56 (MAMAAAASLLPASAAPTLPGRAFRPPRNSTPTASLSCDGGSRCRGVGLGVILGGCR), are a transit peptide targeting the chloroplast. One can recognise a Thioredoxin domain in the interval 72-189 (GSGKYIAPDY…MIRNIIDNEL (118 aa)). Residues cysteine 112 and cysteine 115 each act as nucleophile in the active site. Cysteine 112 and cysteine 115 are joined by a disulfide.

It belongs to the thioredoxin family. Plant CITRX-type subfamily.

It is found in the plastid. The protein localises to the chloroplast. Its function is as follows. Probable thiol-disulfide oxidoreductase that may play a role in proper chloroplast development. This chain is Thioredoxin-like protein CITRX, chloroplastic, found in Oryza sativa subsp. japonica (Rice).